A 376-amino-acid chain; its full sequence is Lipid-A-disaccharide synthase (376 aa).

This sequence belongs to the LpxB family.

It catalyses the reaction a lipid X + a UDP-2-N,3-O-bis[(3R)-3-hydroxyacyl]-alpha-D-glucosamine = a lipid A disaccharide + UDP + H(+). It functions in the pathway bacterial outer membrane biogenesis; LPS lipid A biosynthesis. Its function is as follows. Condensation of UDP-2,3-diacylglucosamine and 2,3-diacylglucosamine-1-phosphate to form lipid A disaccharide, a precursor of lipid A, a phosphorylated glycolipid that anchors the lipopolysaccharide to the outer membrane of the cell. This chain is Lipid-A-disaccharide synthase, found in Pseudomonas fluorescens (strain Pf0-1).